We begin with the raw amino-acid sequence, 65 residues long: Large ribosomal subunit protein uL29 (65 aa).

A disordered region spans residues 30–49 (ERSSVAMGGAPSSPGKMRSI).

This sequence belongs to the universal ribosomal protein uL29 family.

This Picrophilus torridus (strain ATCC 700027 / DSM 9790 / JCM 10055 / NBRC 100828 / KAW 2/3) protein is Large ribosomal subunit protein uL29.